The following is a 165-amino-acid chain: Putative 4-hydroxy-4-methyl-2-oxoglutarate aldolase (165 aa).

Substrate is bound by residues G80–L83 and R102. D103 serves as a coordination point for a divalent metal cation.

It belongs to the class II aldolase/RraA-like family. In terms of assembly, homotrimer. A divalent metal cation serves as cofactor.

The catalysed reaction is 4-hydroxy-4-methyl-2-oxoglutarate = 2 pyruvate. It catalyses the reaction oxaloacetate + H(+) = pyruvate + CO2. Its function is as follows. Catalyzes the aldol cleavage of 4-hydroxy-4-methyl-2-oxoglutarate (HMG) into 2 molecules of pyruvate. Also contains a secondary oxaloacetate (OAA) decarboxylase activity due to the common pyruvate enolate transition state formed following C-C bond cleavage in the retro-aldol and decarboxylation reactions. The sequence is that of Putative 4-hydroxy-4-methyl-2-oxoglutarate aldolase from Cupriavidus taiwanensis (strain DSM 17343 / BCRC 17206 / CCUG 44338 / CIP 107171 / LMG 19424 / R1) (Ralstonia taiwanensis (strain LMG 19424)).